The chain runs to 155 residues: Small ribosomal subunit protein uS7c (155 aa).

Belongs to the universal ribosomal protein uS7 family. As to quaternary structure, part of the 30S ribosomal subunit.

Its subcellular location is the plastid. The protein localises to the chloroplast. Its function is as follows. One of the primary rRNA binding proteins, it binds directly to 16S rRNA where it nucleates assembly of the head domain of the 30S subunit. This is Small ribosomal subunit protein uS7c (rps7) from Ginkgo biloba (Ginkgo).